The sequence spans 656 residues: Pentatricopeptide repeat-containing protein At1g62260, mitochondrial (656 aa).

PPR repeat units lie at residues 70–104 (NTVT…DVVT), 105–134 (WNTM…MPSR), 135–169 (DSFS…NAVS), 170–200 (WSAM…DSSP), 203–227 (ALVA…YGSL), 234–264 (LVYA…IPDL), 280–310 (NVVS…MKDR), 311–345 (DTIS…DAHS), 346–372 (WNMM…TPEK), 373–407 (HTVS…GEKP), 408–438 (DPHT…VVKT), 442–472 (DVPV…MKLK), 474–508 (EVIT…GIYP), 509–544 (SHIT…KIEP), and 545–575 (QMEH…MPFE). The tract at residues 580–655 (VWGALLDACR…ERGSSWVDSS (76 aa)) is type E motif.

The protein belongs to the PPR family. PCMP-E subfamily.

The protein resides in the mitochondrion. In Arabidopsis thaliana (Mouse-ear cress), this protein is Pentatricopeptide repeat-containing protein At1g62260, mitochondrial (PCMP-E10).